Here is a 2203-residue protein sequence, read N- to C-terminus: Genome polyprotein (2203 aa).

G2 is lipidated: N-myristoyl glycine; by host. Residues 2-1513 (GAQVSTQKTG…HVSRAFICLQ (1512 aa)) lie on the Cytoplasmic side of the membrane. The amphipathic alpha-helix stretch occupies residues 567-583 (ELQNDVRQAVEGAIGRV). Residues H890 and D908 each act as for protease 2A activity in the active site. Zn(2+) contacts are provided by C925 and C927. Catalysis depends on C979, which acts as the For protease 2A activity. Residues C985 and H987 each contribute to the Zn(2+) site. Residues 1119–1191 (SNGWLKKFTE…EQSAPSQSDQ (73 aa)) are membrane-binding. The segment at 1119 to 1257 (SNGWLKKFTE…SPGAGKSVAT (139 aa)) is oligomerization. Residues 1140–1144 (AVKIQ) form an RNA-binding region. Positions 1223-1379 (EKKMSNYIQF…SMYSQNGKIN (157 aa)) constitute an SF3 helicase domain. Residues C1387, C1399, and C1404 each contribute to the Zn(2+) site. Residues 1387 to 1404 (CDEECCPVNFKRCCPLVC) form a C4-type; degenerate zinc finger. An RNA-binding region spans residues 1431 to 1438 (EYNHRHSV). The interval 1442–1447 (LEALFQ) is oligomerization. Residues 1514–1529 (ALTTFVSVAGIIYIIY) lie within the membrane without spanning it. Topologically, residues 1530–2203 (KLFAGFQGAY…TLRRKWLDSF (674 aa)) are cytoplasmic. Residue Y1539 is modified to O-(5'-phospho-RNA)-tyrosine. Residues 1559–1737 (GPAFEFAVAM…FSAALLRHYF (179 aa)) enclose the Peptidase C3 domain. Active-site for protease 3C activity residues include H1598, E1629, and C1705. A RdRp catalytic domain is found at 1968-2084 (GHLIAFDYSG…SYPWPIDASL (117 aa)). Mg(2+) contacts are provided by D1974 and D2070.

This sequence belongs to the picornaviruses polyprotein family. Interacts with capsid protein VP1 and capsid protein VP3 to form heterotrimeric protomers. In terms of assembly, interacts with capsid protein VP0, and capsid protein VP3 to form heterotrimeric protomers. Five protomers subsequently associate to form pentamers which serve as building blocks for the capsid. Interacts with capsid protein VP2, capsid protein VP3 and capsid protein VP4 following cleavage of capsid protein VP0. As to quaternary structure, interacts with capsid protein VP1 and capsid protein VP3 in the mature capsid. Interacts with capsid protein VP0 and capsid protein VP1 to form heterotrimeric protomers. Five protomers subsequently associate to form pentamers which serve as building blocks for the capsid. Interacts with capsid protein VP4 in the mature capsid. Interacts with protein 2C; this interaction may be important for virion morphogenesis. In terms of assembly, interacts with capsid protein VP1 and capsid protein VP3. As to quaternary structure, homodimer. Homohexamer; forms a hexameric ring structure with 6-fold symmetry characteristic of AAA+ ATPases. Interacts (via N-terminus) with host RTN3 (via reticulon domain); this interaction is important for viral replication. Interacts with capsid protein VP3; this interaction may be important for virion morphogenesis. In terms of assembly, interacts with protein 3CD. As to quaternary structure, homodimer. Interacts with host GBF1. Interacts (via GOLD domain) with host ACBD3 (via GOLD domain); this interaction allows the formation of a viral protein 3A/ACBD3 heterotetramer with a 2:2 stoichiometry, which will stimulate the recruitment of host PI4KB in order to synthesize PI4P at the viral RNA replication sites. Interacts with RNA-directed RNA polymerase. In terms of assembly, interacts with protein 3AB and with RNA-directed RNA polymerase. As to quaternary structure, interacts with Viral protein genome-linked and with protein 3CD. Requires Mg(2+) as cofactor. Specific enzymatic cleavages in vivo by the viral proteases yield processing intermediates and the mature proteins. Post-translationally, myristoylation is required for the formation of pentamers during virus assembly. Further assembly of 12 pentamers and a molecule of genomic RNA generates the provirion. In terms of processing, during virion maturation, immature virions are rendered infectious following cleavage of VP0 into VP4 and VP2. This maturation seems to be an autocatalytic event triggered by the presence of RNA in the capsid and it is followed by a conformational change infectious virion. Myristoylation is required during RNA encapsidation and formation of the mature virus particle. Post-translationally, VPg is uridylylated by the polymerase into VPg-pUpU. This acts as a nucleotide-peptide primer for the genomic RNA replication.

The protein resides in the virion. The protein localises to the host cytoplasm. It is found in the host cytoplasmic vesicle membrane. Its subcellular location is the host nucleus. It catalyses the reaction a ribonucleoside 5'-triphosphate + H2O = a ribonucleoside 5'-diphosphate + phosphate + H(+). The catalysed reaction is Selective cleavage of Tyr-|-Gly bond in the picornavirus polyprotein.. The enzyme catalyses RNA(n) + a ribonucleoside 5'-triphosphate = RNA(n+1) + diphosphate. It carries out the reaction Selective cleavage of Gln-|-Gly bond in the poliovirus polyprotein. In other picornavirus reactions Glu may be substituted for Gln, and Ser or Thr for Gly.. Replication or transcription is subject to high level of random mutations by the nucleotide analog ribavirin. Forms an icosahedral capsid of pseudo T=3 symmetry with capsid proteins VP2 and VP3. The capsid is 300 Angstroms in diameter, composed of 60 copies of each capsid protein and enclosing the viral positive strand RNA genome. Capsid protein VP1 mainly forms the vertices of the capsid. Capsid protein VP1 interacts with host cell receptor to provide virion attachment to target host cells. This attachment induces virion internalization. Tyrosine kinases are probably involved in the entry process. After binding to its receptor, the capsid undergoes conformational changes. Capsid protein VP1 N-terminus (that contains an amphipathic alpha-helix) and capsid protein VP4 are externalized. Together, they shape a pore in the host membrane through which viral genome is translocated to host cell cytoplasm. Functionally, forms an icosahedral capsid of pseudo T=3 symmetry with capsid proteins VP2 and VP3. The capsid is 300 Angstroms in diameter, composed of 60 copies of each capsid protein and enclosing the viral positive strand RNA genome. Its function is as follows. Lies on the inner surface of the capsid shell. After binding to the host receptor, the capsid undergoes conformational changes. Capsid protein VP4 is released, Capsid protein VP1 N-terminus is externalized, and together, they shape a pore in the host membrane through which the viral genome is translocated into the host cell cytoplasm. In terms of biological role, component of immature procapsids, which is cleaved into capsid proteins VP4 and VP2 after maturation. Allows the capsid to remain inactive before the maturation step. Cysteine protease that cleaves viral polyprotein and specific host proteins. It is responsible for the autocatalytic cleavage between the P1 and P2 regions, which is the first cleavage occurring in the polyprotein. Also cleaves the host translation initiation factor EIF4G1, in order to shut down the capped cellular mRNA translation. Inhibits the host nucleus-cytoplasm protein and RNA trafficking by cleaving host members of the nuclear pores. Counteracts stress granule formation probably by antagonizing its assembly or promoting its dissassembly. Functionally, plays an essential role in the virus replication cycle by acting as a viroporin. Creates a pore in the host endoplasmic reticulum and as a consequence releases Ca2+ in the cytoplasm of infected cell. In turn, high levels of cytoplasmic calcium may trigger membrane trafficking and transport of viral ER-associated proteins to viroplasms, sites of viral genome replication. Its function is as follows. Induces and associates with structural rearrangements of intracellular membranes. Displays RNA-binding, nucleotide binding and NTPase activities. May play a role in virion morphogenesis and viral RNA encapsidation by interacting with the capsid protein VP3. In terms of biological role, localizes the viral replication complex to the surface of membranous vesicles. Together with protein 3CD binds the Cis-Active RNA Element (CRE) which is involved in RNA synthesis initiation. Acts as a cofactor to stimulate the activity of 3D polymerase, maybe through a nucleid acid chaperone activity. Localizes the viral replication complex to the surface of membranous vesicles. It inhibits host cell endoplasmic reticulum-to-Golgi apparatus transport and causes the disassembly of the Golgi complex, possibly through GBF1 interaction. This would result in depletion of MHC, trail receptors and IFN receptors at the host cell surface. Plays an essential role in viral RNA replication by recruiting ACBD3 and PI4KB at the viral replication sites, thereby allowing the formation of the rearranged membranous structures where viral replication takes place. Functionally, acts as a primer for viral RNA replication and remains covalently bound to viral genomic RNA. VPg is uridylylated prior to priming replication into VPg-pUpU. The oriI viral genomic sequence may act as a template for this. The VPg-pUpU is then used as primer on the genomic RNA poly(A) by the RNA-dependent RNA polymerase to replicate the viral genome. During genome replication, the VPg-RNA linkage is removed by the host TDP2, thereby accelerating replication. During the late stage of the replication cycle, host TDP2 is excluded from sites of viral RNA synthesis and encapsidation, allowing for the generation of progeny virions. Its function is as follows. Involved in the viral replication complex and viral polypeptide maturation. It exhibits protease activity with a specificity and catalytic efficiency that is different from protease 3C. Protein 3CD lacks polymerase activity. Protein 3CD binds to the 5'UTR of the viral genome. In terms of biological role, replicates the viral genomic RNA on the surface of intracellular membranes. May form linear arrays of subunits that propagate along a strong head-to-tail interaction called interface-I. Covalently attaches UMP to a tyrosine of VPg, which is used to prime RNA synthesis. The positive stranded RNA genome is first replicated at virus induced membranous vesicles, creating a dsRNA genomic replication form. This dsRNA is then used as template to synthesize positive stranded RNA genomes. ss(+)RNA genomes are either translated, replicated or encapsidated. Major viral protease that mediates proteolytic processing of the polyprotein. Cleaves host EIF5B, contributing to host translation shutoff. Also cleaves host PABPC1, contributing to host translation shutoff. Cleaves host NLRP1, triggers host N-glycine-mediated degradation of the autoinhibitory NLRP1 N-terminal fragment. This chain is Genome polyprotein, found in Echovirus 9 (strain Barty).